The chain runs to 525 residues: GMP synthase [glutamine-hydrolyzing] (525 aa).

Positions 8–207 (KILILDFGSQ…AVAICGCGTN (200 aa)) constitute a Glutamine amidotransferase type-1 domain. Residue Cys85 is the Nucleophile of the active site. Residues His181 and Glu183 contribute to the active site. Positions 208-400 (WKPSSIIEDA…LGLPYNMLYR (193 aa)) constitute a GMPS ATP-PPase domain. 235–241 (SGGVDSS) provides a ligand contact to ATP.

Homodimer.

The catalysed reaction is XMP + L-glutamine + ATP + H2O = GMP + L-glutamate + AMP + diphosphate + 2 H(+). The protein operates within purine metabolism; GMP biosynthesis; GMP from XMP (L-Gln route): step 1/1. In terms of biological role, catalyzes the synthesis of GMP from XMP. This Shewanella denitrificans (strain OS217 / ATCC BAA-1090 / DSM 15013) protein is GMP synthase [glutamine-hydrolyzing].